The following is a 129-amino-acid chain: Large ribosomal subunit protein bL12c (129 aa).

The protein belongs to the bacterial ribosomal protein bL12 family. In terms of assembly, homodimer. Part of the ribosomal stalk of the 50S ribosomal subunit. Forms a multimeric L10(L12)X complex, where L10 forms an elongated spine to which 2 to 4 L12 dimers bind in a sequential fashion. Binds GTP-bound translation factors.

The protein localises to the plastid. It is found in the chloroplast. Forms part of the ribosomal stalk which helps the ribosome interact with GTP-bound translation factors. Is thus essential for accurate translation. This Oltmannsiellopsis viridis (Marine flagellate) protein is Large ribosomal subunit protein bL12c.